We begin with the raw amino-acid sequence, 299 residues long: Oxygen-dependent coproporphyrinogen-III oxidase (299 aa).

Substrate is bound at residue Ser92. A divalent metal cation contacts are provided by His96 and His106. Catalysis depends on His106, which acts as the Proton donor. Residue 108 to 110 participates in substrate binding; sequence NVR. Positions 145 and 175 each coordinate a divalent metal cation. The segment at 240–275 is important for dimerization; sequence YVEFNLVWDRGTLFGLQTGGRTESILMSMPPLVRWE. 258 to 260 serves as a coordination point for substrate; sequence GGR.

This sequence belongs to the aerobic coproporphyrinogen-III oxidase family. As to quaternary structure, homodimer. The cofactor is a divalent metal cation.

The protein resides in the cytoplasm. The enzyme catalyses coproporphyrinogen III + O2 + 2 H(+) = protoporphyrinogen IX + 2 CO2 + 2 H2O. Its pathway is porphyrin-containing compound metabolism; protoporphyrin-IX biosynthesis; protoporphyrinogen-IX from coproporphyrinogen-III (O2 route): step 1/1. Functionally, involved in the heme biosynthesis. Catalyzes the aerobic oxidative decarboxylation of propionate groups of rings A and B of coproporphyrinogen-III to yield the vinyl groups in protoporphyrinogen-IX. This chain is Oxygen-dependent coproporphyrinogen-III oxidase, found in Salmonella dublin (strain CT_02021853).